The sequence spans 630 residues: tRNA uridine 5-carboxymethylaminomethyl modification enzyme MnmG (630 aa).

13-18 serves as a coordination point for FAD; it reads GGGHAG. 273–287 provides a ligand contact to NAD(+); the sequence is GPRYCPSIEDKVNRF.

This sequence belongs to the MnmG family. In terms of assembly, homodimer. Heterotetramer of two MnmE and two MnmG subunits. FAD is required as a cofactor.

The protein resides in the cytoplasm. In terms of biological role, NAD-binding protein involved in the addition of a carboxymethylaminomethyl (cmnm) group at the wobble position (U34) of certain tRNAs, forming tRNA-cmnm(5)s(2)U34. The sequence is that of tRNA uridine 5-carboxymethylaminomethyl modification enzyme MnmG from Teredinibacter turnerae (strain ATCC 39867 / T7901).